The chain runs to 108 residues: CRISPR-associated endoribonuclease Cas2 (108 aa).

Residue Asp-15 coordinates Mg(2+).

The protein belongs to the CRISPR-associated endoribonuclease Cas2 protein family. Homodimer, forms a heterotetramer with a Cas1 homodimer. The cofactor is Mg(2+).

CRISPR (clustered regularly interspaced short palindromic repeat), is an adaptive immune system that provides protection against mobile genetic elements (viruses, transposable elements and conjugative plasmids). CRISPR clusters contain sequences complementary to antecedent mobile elements and target invading nucleic acids. CRISPR clusters are transcribed and processed into CRISPR RNA (crRNA). Functions as a ssRNA-specific endoribonuclease. Involved in the integration of spacer DNA into the CRISPR cassette. In Paracidovorax avenae (strain ATCC 19860 / DSM 7227 / CCUG 15838 / JCM 20985 / LMG 2117 / NCPPB 1011) (Acidovorax avenae), this protein is CRISPR-associated endoribonuclease Cas2.